The sequence spans 148 residues: uncharacterized protein (148 aa).

An N-acetyltransferase domain is found at Leu7 to Arg148.

This is an uncharacterized protein from Staphylococcus aureus (strain Mu50 / ATCC 700699).